We begin with the raw amino-acid sequence, 994 residues long: Phosphoenolpyruvate carboxylase (994 aa).

Residues 1 to 66 are disordered; it reads MKSSGSARAT…QGRTREDKDR (66 aa). Low complexity-rich tracts occupy residues 14–25 and 41–54; these read AVSSSSAPAHAE and AAAR…AASA. Residues His-204 and Lys-646 contribute to the active site.

Belongs to the PEPCase type 1 family. Mg(2+) serves as cofactor.

It catalyses the reaction oxaloacetate + phosphate = phosphoenolpyruvate + hydrogencarbonate. Forms oxaloacetate, a four-carbon dicarboxylic acid source for the tricarboxylic acid cycle. The polypeptide is Phosphoenolpyruvate carboxylase (Burkholderia mallei (strain NCTC 10247)).